The sequence spans 479 residues: Sulfate adenylyltransferase subunit 1 (479 aa).

Residues 25–239 form the tr-type G domain; that stretch reads KSLLRFLTCG…EVLETVDIQR (215 aa). The interval 34-41 is G1; the sequence is GSVDDGKS. 34 to 41 contributes to the GTP binding site; sequence GSVDDGKS. A G2 region spans residues 92 to 96; it reads GITID. The tract at residues 113 to 116 is G3; sequence DTPG. GTP-binding positions include 113-117 and 168-171; these read DTPGH and NKMD. The interval 168–171 is G4; that stretch reads NKMD. Residues 206–208 form a G5 region; that stretch reads SAL.

Belongs to the TRAFAC class translation factor GTPase superfamily. Classic translation factor GTPase family. CysN/NodQ subfamily. In terms of assembly, heterodimer composed of CysD, the smaller subunit, and CysN.

It carries out the reaction sulfate + ATP + H(+) = adenosine 5'-phosphosulfate + diphosphate. Its pathway is sulfur metabolism; hydrogen sulfide biosynthesis; sulfite from sulfate: step 1/3. Functionally, with CysD forms the ATP sulfurylase (ATPS) that catalyzes the adenylation of sulfate producing adenosine 5'-phosphosulfate (APS) and diphosphate, the first enzymatic step in sulfur assimilation pathway. APS synthesis involves the formation of a high-energy phosphoric-sulfuric acid anhydride bond driven by GTP hydrolysis by CysN coupled to ATP hydrolysis by CysD. The sequence is that of Sulfate adenylyltransferase subunit 1 from Salmonella choleraesuis (strain SC-B67).